Here is a 106-residue protein sequence, read N- to C-terminus: UPF0060 membrane protein Bxeno_B1021 (106 aa).

Transmembrane regions (helical) follow at residues Lys2–Trp22, Ser30–Leu50, Val58–Asp78, and Pro82–Phe102.

This sequence belongs to the UPF0060 family.

Its subcellular location is the cell inner membrane. The polypeptide is UPF0060 membrane protein Bxeno_B1021 (Paraburkholderia xenovorans (strain LB400)).